The sequence spans 942 residues: Isoleucine--tRNA ligase (942 aa).

Positions 58–68 match the 'HIGH' region motif; the sequence is PYANGDIHIGH. E566 provides a ligand contact to L-isoleucyl-5'-AMP. Positions 607–611 match the 'KMSKS' region motif; that stretch reads KMSKS. K610 contacts ATP. Zn(2+)-binding residues include C905, C908, C925, and C928.

It belongs to the class-I aminoacyl-tRNA synthetase family. IleS type 1 subfamily. In terms of assembly, monomer. Requires Zn(2+) as cofactor.

The protein localises to the cytoplasm. The catalysed reaction is tRNA(Ile) + L-isoleucine + ATP = L-isoleucyl-tRNA(Ile) + AMP + diphosphate. In terms of biological role, catalyzes the attachment of isoleucine to tRNA(Ile). As IleRS can inadvertently accommodate and process structurally similar amino acids such as valine, to avoid such errors it has two additional distinct tRNA(Ile)-dependent editing activities. One activity is designated as 'pretransfer' editing and involves the hydrolysis of activated Val-AMP. The other activity is designated 'posttransfer' editing and involves deacylation of mischarged Val-tRNA(Ile). In Pseudoalteromonas atlantica (strain T6c / ATCC BAA-1087), this protein is Isoleucine--tRNA ligase.